A 143-amino-acid chain; its full sequence is Mini-ribonuclease 3 (143 aa).

The active site involves aspartate 35.

The protein belongs to the MrnC RNase family. In terms of assembly, homodimer. Requires Mg(2+) as cofactor.

Its subcellular location is the cytoplasm. In terms of biological role, involved in correct processing of both the 5' and 3' ends of 23S rRNA precursor. Processes 30S rRNA precursor transcript even in absence of ribonuclease 3 (Rnc); Rnc processes 30S rRNA into smaller rRNA precursors. This chain is Mini-ribonuclease 3, found in Synechocystis sp. (strain ATCC 27184 / PCC 6803 / Kazusa).